We begin with the raw amino-acid sequence, 231 residues long: Sugar fermentation stimulation protein homolog (231 aa).

This sequence belongs to the SfsA family.

This is Sugar fermentation stimulation protein homolog from Geobacter sp. (strain M21).